The sequence spans 61 residues: Small ribosomal subunit protein uS14 (61 aa).

Zn(2+) contacts are provided by cysteine 24, cysteine 27, cysteine 40, and cysteine 43.

This sequence belongs to the universal ribosomal protein uS14 family. Zinc-binding uS14 subfamily. As to quaternary structure, part of the 30S ribosomal subunit. Contacts proteins S3 and S10. It depends on Zn(2+) as a cofactor.

Its function is as follows. Binds 16S rRNA, required for the assembly of 30S particles and may also be responsible for determining the conformation of the 16S rRNA at the A site. This Sulfurimonas denitrificans (strain ATCC 33889 / DSM 1251) (Thiomicrospira denitrificans (strain ATCC 33889 / DSM 1251)) protein is Small ribosomal subunit protein uS14.